Here is a 455-residue protein sequence, read N- to C-terminus: Argininosuccinate lyase (455 aa).

The protein belongs to the lyase 1 family. Argininosuccinate lyase subfamily.

The protein localises to the cytoplasm. The enzyme catalyses 2-(N(omega)-L-arginino)succinate = fumarate + L-arginine. It functions in the pathway amino-acid biosynthesis; L-arginine biosynthesis; L-arginine from L-ornithine and carbamoyl phosphate: step 3/3. The chain is Argininosuccinate lyase from Roseiflexus castenholzii (strain DSM 13941 / HLO8).